A 426-amino-acid polypeptide reads, in one-letter code: Glutamyl-tRNA reductase (426 aa).

Substrate is bound by residues 49 to 52 (TCNR), S110, 115 to 117 (EAQ), and Q121. C50 (nucleophile) is an active-site residue. Position 191 to 196 (191 to 196 (GAGEMA)) interacts with NADP(+).

It belongs to the glutamyl-tRNA reductase family. Homodimer.

It carries out the reaction (S)-4-amino-5-oxopentanoate + tRNA(Glu) + NADP(+) = L-glutamyl-tRNA(Glu) + NADPH + H(+). It functions in the pathway porphyrin-containing compound metabolism; protoporphyrin-IX biosynthesis; 5-aminolevulinate from L-glutamyl-tRNA(Glu): step 1/2. In terms of biological role, catalyzes the NADPH-dependent reduction of glutamyl-tRNA(Glu) to glutamate 1-semialdehyde (GSA). In Rhodopirellula baltica (strain DSM 10527 / NCIMB 13988 / SH1), this protein is Glutamyl-tRNA reductase.